The chain runs to 74 residues: Small ribosomal subunit protein bS18 (74 aa).

This sequence belongs to the bacterial ribosomal protein bS18 family. In terms of assembly, part of the 30S ribosomal subunit. Forms a tight heterodimer with protein bS6.

Binds as a heterodimer with protein bS6 to the central domain of the 16S rRNA, where it helps stabilize the platform of the 30S subunit. This is Small ribosomal subunit protein bS18 from Zymomonas mobilis subsp. mobilis (strain ATCC 31821 / ZM4 / CP4).